A 25-amino-acid polypeptide reads, in one-letter code: Large ribosomal subunit protein uL30 (25 aa).

This sequence belongs to the universal ribosomal protein uL30 family. In terms of assembly, part of the 50S ribosomal subunit.

This chain is Large ribosomal subunit protein uL30 (rpmD), found in Pseudomonas putida (Arthrobacter siderocapsulatus).